We begin with the raw amino-acid sequence, 407 residues long: Peptidase T (407 aa).

His82 is a binding site for Zn(2+). Asp84 is a catalytic residue. Asp143 is a Zn(2+) binding site. Residue Glu177 is the Proton acceptor of the active site. The Zn(2+) site is built by Glu178, Asp200, and His382.

It belongs to the peptidase M20B family. Zn(2+) serves as cofactor.

The protein localises to the cytoplasm. It carries out the reaction Release of the N-terminal residue from a tripeptide.. Functionally, cleaves the N-terminal amino acid of tripeptides. In Streptococcus pyogenes serotype M1, this protein is Peptidase T.